A 262-amino-acid polypeptide reads, in one-letter code: Adenosylcobinamide-GDP ribazoletransferase (262 aa).

Transmembrane regions (helical) follow at residues 43 to 63 (PLAG…LGAI), 121 to 141 (VALI…LPLL), 145 to 165 (GGGV…VWHW), and 195 to 215 (GVIL…AVLL).

Belongs to the CobS family. The cofactor is Mg(2+).

Its subcellular location is the cell inner membrane. It carries out the reaction alpha-ribazole + adenosylcob(III)inamide-GDP = adenosylcob(III)alamin + GMP + H(+). The enzyme catalyses alpha-ribazole 5'-phosphate + adenosylcob(III)inamide-GDP = adenosylcob(III)alamin 5'-phosphate + GMP + H(+). Its pathway is cofactor biosynthesis; adenosylcobalamin biosynthesis; adenosylcobalamin from cob(II)yrinate a,c-diamide: step 7/7. Joins adenosylcobinamide-GDP and alpha-ribazole to generate adenosylcobalamin (Ado-cobalamin). Also synthesizes adenosylcobalamin 5'-phosphate from adenosylcobinamide-GDP and alpha-ribazole 5'-phosphate. This Sinorhizobium medicae (strain WSM419) (Ensifer medicae) protein is Adenosylcobinamide-GDP ribazoletransferase.